The sequence spans 270 residues: Aliphatic sulfonates import ATP-binding protein SsuB (270 aa).

Residues L17–L238 enclose the ABC transporter domain. Position 49 to 56 (G49 to S56) interacts with ATP. The interval P250 to H270 is disordered. Residues G251–P261 show a composition bias toward pro residues.

It belongs to the ABC transporter superfamily. Aliphatic sulfonates importer (TC 3.A.1.17.2) family. The complex is composed of two ATP-binding proteins (SsuB), two transmembrane proteins (SsuC) and a solute-binding protein (SsuA).

It is found in the cell inner membrane. The enzyme catalyses ATP + H2O + aliphatic sulfonate-[sulfonate-binding protein]Side 1 = ADP + phosphate + aliphatic sulfonateSide 2 + [sulfonate-binding protein]Side 1.. Functionally, part of the ABC transporter complex SsuABC involved in aliphatic sulfonates import. Responsible for energy coupling to the transport system. The polypeptide is Aliphatic sulfonates import ATP-binding protein SsuB (Pseudomonas entomophila (strain L48)).